The chain runs to 264 residues: MSSSAPIGVFDSGLGGISVARQIAKDMPAEHVLYFGDSANAPYGIKTPEQVRALSFDIVERFVRQGVKAVVIACNTATSAAVNDLREHYDIPIIGMEPALKVACDRGDVPSDPHHIPQRVIVAATPLTLRERKFAKLMDRFDSNNTIFKEPCPDLVEIVESGRLGDHDLVMRTLHGYFDQYDMEHIDSVVLGCTHFVFYRDYFRELLPERAAVIDGNEGTVRHLGVVLESLGKLAPEDATGGVELANSDPSERIAELSRKLLNV.

Substrate-binding positions include Asp-11 to Ser-12 and Tyr-43 to Gly-44. Residue Cys-74 is the Proton donor/acceptor of the active site. Asn-75–Thr-76 contributes to the substrate binding site. Cys-193 (proton donor/acceptor) is an active-site residue. Thr-194–His-195 serves as a coordination point for substrate.

Belongs to the aspartate/glutamate racemases family.

It carries out the reaction L-glutamate = D-glutamate. Its pathway is cell wall biogenesis; peptidoglycan biosynthesis. Provides the (R)-glutamate required for cell wall biosynthesis. The sequence is that of Glutamate racemase from Bifidobacterium longum (strain DJO10A).